Here is a 98-residue protein sequence, read N- to C-terminus: NADH-ubiquinone oxidoreductase chain 4L (98 aa).

The next 3 helical transmembrane spans lie at 1–21, 29–49, and 61–81; these read MSLT…GLLL, SLLC…MIIL, and IILL…LVMV.

The protein belongs to the complex I subunit 4L family. Core subunit of respiratory chain NADH dehydrogenase (Complex I) which is composed of 45 different subunits.

Its subcellular location is the mitochondrion inner membrane. The enzyme catalyses a ubiquinone + NADH + 5 H(+)(in) = a ubiquinol + NAD(+) + 4 H(+)(out). Core subunit of the mitochondrial membrane respiratory chain NADH dehydrogenase (Complex I) which catalyzes electron transfer from NADH through the respiratory chain, using ubiquinone as an electron acceptor. Part of the enzyme membrane arm which is embedded in the lipid bilayer and involved in proton translocation. This Platyrrhinus brachycephalus (Short-headed broad-nosed bat) protein is NADH-ubiquinone oxidoreductase chain 4L (MT-ND4L).